A 178-amino-acid chain; its full sequence is Large ribosomal subunit protein uL6 (178 aa).

This sequence belongs to the universal ribosomal protein uL6 family. Part of the 50S ribosomal subunit.

Its function is as follows. This protein binds to the 23S rRNA, and is important in its secondary structure. It is located near the subunit interface in the base of the L7/L12 stalk, and near the tRNA binding site of the peptidyltransferase center. The sequence is that of Large ribosomal subunit protein uL6 from Halobacterium salinarum (strain ATCC 700922 / JCM 11081 / NRC-1) (Halobacterium halobium).